A 240-amino-acid polypeptide reads, in one-letter code: Fibronectin type III domain-containing protein 5 (240 aa).

Gly residues predominate over residues methionine 1–arginine 10. Residues methionine 1 to alanine 30 are disordered. Residues proline 11–arginine 24 are compositionally biased toward basic and acidic residues. The Fibronectin type-III domain occupies alanine 64–glutamate 155. Residues asparagine 67 and asparagine 112 are each glycosylated (N-linked (GlcNAc...) asparagine). A helical membrane pass occupies residues glycine 181 to cysteine 201. A compositionally biased stretch (basic and acidic residues) spans asparagine 210 to serine 221. Residues asparagine 210–isoleucine 240 form a disordered region. A compositionally biased stretch (gly residues) spans glutamine 231–isoleucine 240. The Microbody targeting signal motif lies at serine 238–isoleucine 240.

In terms of assembly, dimer; may exist in other oligomeric forms. N-Glycosylated. Post-translationally, the extracellular domain is cleaved and released from the cell membrane.

It localises to the cell membrane. The protein resides in the peroxisome membrane. Its subcellular location is the secreted. In terms of biological role, mediates beneficial effects of muscular exercise. Induces browning of white adipose tissue by stimulating UCP1 expression, at least in part, via the nuclear receptor PPARA. This Rattus norvegicus (Rat) protein is Fibronectin type III domain-containing protein 5 (Fndc5).